A 218-amino-acid polypeptide reads, in one-letter code: Deoxyribose-phosphate aldolase (218 aa).

Asp-92 (proton donor/acceptor) is an active-site residue. Lys-156 acts as the Schiff-base intermediate with acetaldehyde in catalysis. The Proton donor/acceptor role is filled by Lys-185.

Belongs to the DeoC/FbaB aldolase family. DeoC type 1 subfamily.

It localises to the cytoplasm. The enzyme catalyses 2-deoxy-D-ribose 5-phosphate = D-glyceraldehyde 3-phosphate + acetaldehyde. It functions in the pathway carbohydrate degradation; 2-deoxy-D-ribose 1-phosphate degradation; D-glyceraldehyde 3-phosphate and acetaldehyde from 2-deoxy-alpha-D-ribose 1-phosphate: step 2/2. In terms of biological role, catalyzes a reversible aldol reaction between acetaldehyde and D-glyceraldehyde 3-phosphate to generate 2-deoxy-D-ribose 5-phosphate. The polypeptide is Deoxyribose-phosphate aldolase (Desulfitobacterium hafniense (strain Y51)).